The following is a 151-amino-acid chain: Transcriptional repressor NrdR (151 aa).

A zinc finger lies at 3-34 (CPYCAYGESKVVDSRSTEDGSSIRRRRECLKC). The ATP-cone domain maps to 49–139 (ILVIKKNMSR…VYRQFKDINT (91 aa)).

This sequence belongs to the NrdR family. It depends on Zn(2+) as a cofactor.

In terms of biological role, negatively regulates transcription of bacterial ribonucleotide reductase nrd genes and operons by binding to NrdR-boxes. The protein is Transcriptional repressor NrdR of Clostridium botulinum (strain ATCC 19397 / Type A).